Here is a 159-residue protein sequence, read N- to C-terminus: Transcriptional repressor NrdR (159 aa).

The segment at 3–34 is a zinc-finger region; it reads CPTCQNTDSRVLESRSADTGKSVRRRRECLNC. The ATP-cone domain maps to 49 to 139; sequence ISVIKKDGSR…VYRKFNGVKD (91 aa).

Belongs to the NrdR family. Zn(2+) is required as a cofactor.

In terms of biological role, negatively regulates transcription of bacterial ribonucleotide reductase nrd genes and operons by binding to NrdR-boxes. The polypeptide is Transcriptional repressor NrdR (Prochlorococcus marinus subsp. pastoris (strain CCMP1986 / NIES-2087 / MED4)).